Reading from the N-terminus, the 477-residue chain is MISKLTKIVATISDLRCEPEHIKDLHDAGVNVIRLNTAHQSHEDTIKVIDNVRKISNKIALMIDTKGPEVRTANIENPIIVKTGDKVIISTSPINEPNNFQTNYDGFVKEVPQGSKVLIDDGELEMTVVAKLPDRLICEIKNDGQIKNKKSINTPGISLKLQSVTEKDKGFIELAAKYNVDFIAHSFVRHSKDVQDVQEILTASGNPDVKIISKIENQEGIDNIEEIAKASYGIMVARGDMGVEIPAEDVPIAQLKITQTCIKYGIPVITATQMLHTMIENPRPTRAEVSDIANAILNGTDAIMLSGETAYGKYPIEAVKMMTSIAKKVEKHRKMTLYKDELFYDKSITRNYIIKCAIDATKLMDIKAIIVDSLKGKTARIMATYRASVPLFITTNSERLARELALSYGVYSNLVDNNFKRTTEFVVTSLKMLKEQGVVNDKDTVIIISGNPNRNIEKGTEFMEINTVEDAIKGRNI.

Arg-34 provides a ligand contact to substrate. K(+)-binding residues include Asn-36, Asp-64, and Thr-65. Residue 36 to 39 (NTAH) participates in ATP binding. Residues Arg-71 and Lys-150 each coordinate ATP. Glu-216 serves as a coordination point for Mg(2+). Gly-239, Asp-240, and Thr-272 together coordinate substrate. Residue Asp-240 coordinates Mg(2+).

It belongs to the pyruvate kinase family. Homotetramer. The cofactor is Mg(2+). It depends on K(+) as a cofactor.

The catalysed reaction is pyruvate + ATP = phosphoenolpyruvate + ADP + H(+). Its pathway is carbohydrate degradation; glycolysis; pyruvate from D-glyceraldehyde 3-phosphate: step 5/5. This Borreliella burgdorferi (strain ATCC 35210 / DSM 4680 / CIP 102532 / B31) (Borrelia burgdorferi) protein is Pyruvate kinase (pyk).